The following is a 461-amino-acid chain: Chromosomal replication initiator protein DnaA (461 aa).

Residues 1–83 (MDHSPWQRCL…LRFDVGSKPT (83 aa)) are domain I, interacts with DnaA modulators. Residues 83–124 (TIDNSVTNSPVSRNTGGNESLFAKATSAPKVAEPESNIPKKT) are domain II. A domain III, AAA+ region region spans residues 125–341 (NVRLNYTFEN…GALNRVIANA (217 aa)). Glycine 169, glycine 171, lysine 172, and threonine 173 together coordinate ATP. A domain IV, binds dsDNA region spans residues 342-461 (NFTGRAITID…YSNLIRTLSS (120 aa)).

Belongs to the DnaA family. In terms of assembly, oligomerizes as a right-handed, spiral filament on DNA at oriC.

The protein resides in the cytoplasm. Plays an essential role in the initiation and regulation of chromosomal replication. ATP-DnaA binds to the origin of replication (oriC) to initiate formation of the DNA replication initiation complex once per cell cycle. Binds the DnaA box (a 9 base pair repeat at the origin) and separates the double-stranded (ds)DNA. Forms a right-handed helical filament on oriC DNA; dsDNA binds to the exterior of the filament while single-stranded (ss)DNA is stabiized in the filament's interior. The ATP-DnaA-oriC complex binds and stabilizes one strand of the AT-rich DNA unwinding element (DUE), permitting loading of DNA polymerase. After initiation quickly degrades to an ADP-DnaA complex that is not apt for DNA replication. Binds acidic phospholipids. This Colwellia psychrerythraea (strain 34H / ATCC BAA-681) (Vibrio psychroerythus) protein is Chromosomal replication initiator protein DnaA.